Here is a 451-residue protein sequence, read N- to C-terminus: Probable plasmid replicative DNA helicase (451 aa).

The SF4 helicase domain maps to 194 to 451 (QNSFFDAFPT…SKFSAIKKVW (258 aa)). ATP is bound at residue 225–232 (ARPSIGKT).

The protein belongs to the helicase family. DnaB subfamily. Homohexamer.

It catalyses the reaction Couples ATP hydrolysis with the unwinding of duplex DNA at the replication fork by translocating in the 5'-3' direction. This creates two antiparallel DNA single strands (ssDNA). The leading ssDNA polymer is the template for DNA polymerase III holoenzyme which synthesizes a continuous strand.. It carries out the reaction ATP + H2O = ADP + phosphate + H(+). A replicative DNA helicase, it participates in initiation and elongation during DNA replication. Travels ahead of the DNA replisome, separating dsDNA into templates for DNA synthesis. A processive ATP-dependent 5'-3' DNA helicase it has DNA-dependent ATPase activity. In terms of biological role, the plasmid this protein is encoded on is thought to be required for growth within mammalian cells. This is Probable plasmid replicative DNA helicase from Chlamydia trachomatis serovar L2 (strain ATCC VR-902B / DSM 19102 / 434/Bu).